The chain runs to 153 residues: MPKGTGKVLAQNRKASHDYIIEETIEAGIELKGTEIKSIRRGSANLRDSYARVYKGEVFVYNMHIAPYEEGNRFNHDPLRTRKLLLKRKQIDKLFGQTREQGYTLVPLKLYIKNGYCKMLIGVAKGKKDYDKRHALKAKEAKREMDRAMKERY.

It belongs to the SmpB family.

The protein localises to the cytoplasm. In terms of biological role, required for rescue of stalled ribosomes mediated by trans-translation. Binds to transfer-messenger RNA (tmRNA), required for stable association of tmRNA with ribosomes. tmRNA and SmpB together mimic tRNA shape, replacing the anticodon stem-loop with SmpB. tmRNA is encoded by the ssrA gene; the 2 termini fold to resemble tRNA(Ala) and it encodes a 'tag peptide', a short internal open reading frame. During trans-translation Ala-aminoacylated tmRNA acts like a tRNA, entering the A-site of stalled ribosomes, displacing the stalled mRNA. The ribosome then switches to translate the ORF on the tmRNA; the nascent peptide is terminated with the 'tag peptide' encoded by the tmRNA and targeted for degradation. The ribosome is freed to recommence translation, which seems to be the essential function of trans-translation. This Macrococcus caseolyticus (strain JCSC5402) (Macrococcoides caseolyticum) protein is SsrA-binding protein.